The chain runs to 158 residues: Transcription elongation factor GreA (158 aa).

The protein belongs to the GreA/GreB family.

In terms of biological role, necessary for efficient RNA polymerase transcription elongation past template-encoded arresting sites. The arresting sites in DNA have the property of trapping a certain fraction of elongating RNA polymerases that pass through, resulting in locked ternary complexes. Cleavage of the nascent transcript by cleavage factors such as GreA or GreB allows the resumption of elongation from the new 3'terminus. GreA releases sequences of 2 to 3 nucleotides. The sequence is that of Transcription elongation factor GreA from Methylobacterium nodulans (strain LMG 21967 / CNCM I-2342 / ORS 2060).